The following is a 32-amino-acid chain: DCAGYMRECKEKLCCSGYVCSSRWKWCVLPAP.

Cystine bridges form between cysteine 2–cysteine 15, cysteine 9–cysteine 20, and cysteine 14–cysteine 27.

Belongs to the neurotoxin 10 (Hwtx-1) family. 16 (Hntx-8) subfamily. In terms of tissue distribution, expressed by the venom gland.

It is found in the secreted. Ion channel inhibitor. The polypeptide is U3-theraphotoxin-Hhn1r (Cyriopagopus hainanus (Chinese bird spider)).